Reading from the N-terminus, the 132-residue chain is MAEFVEADNAEAIIARIETKSRKIESLLKQYKHVEALKTALEGSPPKTRDERCKSANWIVVHRALMAIKDIDGMLNALDVEYYDILMKYLYRGLSTGDRPTCDQCLKIHEKLTERAGLGCILRCLTDTINTV.

Ala2 is modified (N-acetylalanine).

Belongs to the ARPC5 family. As to quaternary structure, component of the Arp2/3 complex composed of ARP2, ARP3, ARPC1/p41-ARC, ARPC2/p34-ARC, ARPC3/p21-ARC, ARPC4/p20-ARC and ARPC5/p16-ARC. As to expression, expressed at low levels in all tissues with a relatively highest expression in inflorescences.

The protein localises to the cytoplasm. It localises to the cytoskeleton. The protein resides in the cell projection. Functions as a component of the Arp2/3 complex which is involved in regulation of actin polymerization and together with an activating nucleation-promoting factor (NPF) mediates the formation of branched actin networks. Arp2/3 complex plays a critical role in the control of cell morphogenesis via the modulation of cell polarity development. The polypeptide is Actin-related protein 2/3 complex subunit 5A (ARPC5A) (Arabidopsis thaliana (Mouse-ear cress)).